The chain runs to 111 residues: HTH-type transcriptional regulator SinR (111 aa).

The region spanning 6–61 is the HTH cro/C1-type domain; sequence IKQYRKEKGYSLSELAEKAGVAKSYLSSIERNLQTNPSIQFLEKVSAVLDVSVHTL. A DNA-binding region (H-T-H motif) is located at residues 17–36; it reads LSELAEKAGVAKSYLSSIER. The region spanning 65–103 is the Sin domain; it reads KDETEYDGQLDSEWENLVRDAMASGVSKKQFREFLDYQK.

In terms of assembly, homotetramer. Also associates with SinI.

Its function is as follows. Affects autolysin level and flagellation. The polypeptide is HTH-type transcriptional regulator SinR (sinR) (Bacillus licheniformis).